The primary structure comprises 808 residues: MLHSPIPTKADPMIFEAAADRAARAIPPVWPLMSSVAVNPFLGQAGETLAKAGARLARVAGIAITMPRHWYQQKIDTGEISDADLLAALACAPADLRPIDLAALKAAAALNPPRPQALASVADLAARASGVDWPGLLTERLGAWMAGYFDEGQALWAAPRGKSAYGAWRAVATHDLTPEIAGLRGFARHVSEAPETAMAVIARVCTRLDLPVEALETYFHQMLMSLGGWGQYARYKLWQAELAGGSDQTITDLLAIRLIWEEALFLRYGDQIGEAWAHVRVAHAAPVVATPDLMIDAILQDAAERAAQRELARILAGNAPQIHETRPLVQAAFCIDVRSEVFRRALESLNPQIQTLGFAGFFGLAASHRRFASDVAESRFPVLLNPALKSRAGGPYRAEDAEPQRIKARAKRAWGRFKLAAVSSFAFVEATGPIYVGKLLSDALGLPHASAPNDPAPQLDPALDLASRVKAAGAVLRAMSLTTGFARLVLLAGHGANTVNNPHASGLHCGACGGYSGEVNARLLAALLNDPDVRAGLTETGMAIPQDTLFLAALHDTTTDRVTLYADDHPCQTHEADIAQARTWLADAGRLARGERALRLPRAADETSISKRSRDWSETRPEWALAGCKAFIAAPRSRTATKNLEGRAFLHDYDWTQDKSFSTLELILTAPVIVASWISLQYYGSTVAPEAFGGGNKLLHNVTGGIGVVEGNGGLLRAGLPWQSVHDGQNYMHEPLRLSVCLEAPVAAISEVLGRHDGVRALFDNGWLHLFTLNEEGSIAWRYNGGLQWVPIDDTEDAEQRSKLKVAV.

Residues Cys-334, Asp-336, His-494, and Cys-509 each coordinate Zn(2+).

The protein belongs to the inorganic carbon transporter (TC 9.A.2) DabA family. Forms a complex with DabB. The cofactor is Zn(2+).

The protein resides in the cell inner membrane. Functionally, part of an energy-coupled inorganic carbon pump. This is Probable inorganic carbon transporter subunit DabA from Allorhizobium ampelinum (strain ATCC BAA-846 / DSM 112012 / S4) (Agrobacterium vitis (strain S4)).